We begin with the raw amino-acid sequence, 422 residues long: Histidine--tRNA ligase (422 aa).

This sequence belongs to the class-II aminoacyl-tRNA synthetase family. Homodimer.

The protein localises to the cytoplasm. The enzyme catalyses tRNA(His) + L-histidine + ATP = L-histidyl-tRNA(His) + AMP + diphosphate + H(+). The sequence is that of Histidine--tRNA ligase from Alcanivorax borkumensis (strain ATCC 700651 / DSM 11573 / NCIMB 13689 / SK2).